The primary structure comprises 39 residues: Alpha-conotoxin ArIA (39 aa).

Positions 1 to 17 (SDGRNVAAKAFHRIGRT) are excised as a propeptide. 2 disulfide bridges follow: Cys22/Cys28 and Cys23/Cys36. A ser-Xaa-Pro motif, crucial for potent interaction with nAChR region spans residues 24–26 (SNP). The residue at position 33 (Pro33) is a 4-hydroxyproline; in ArIA.

It belongs to the conotoxin A superfamily. Expressed by the venom duct.

It localises to the secreted. In terms of biological role, alpha-conotoxins act on postsynaptic membranes, they bind to the nicotinic acetylcholine receptors (nAChR) and thus inhibit them. This toxin acts as a competitive inhibitor and is 3-fold more potent on alpha-7/CHRNA7 nAChRs (IC(50)=6 nM) than on alpha-3-beta-2/CHRNA3-CHRNB2 nAChR (IC(50)=18 nM). Functionally, acts as a competitive inhibitor and is 33-fold more potent on alpha-7/CHRNA7 nAChRs (IC(50)=1.8 nM) than on alpha-3-beta-2/CHRNA3-CHRNB2 nAChR (IC(50)=60.1 nM). This Conus arenatus (Sand-dusted cone) protein is Alpha-conotoxin ArIA.